The chain runs to 213 residues: MEIESKFKRICVFCGSSAGNKVSYKDAAIELGTELVSRNIDLVYGGGSIGLMGLISQAVFNGGRHVIGVIPKTLMPREITGETVGEVKAVADMHQRKAEMAKHSDAFIALPGGYGTLEELLEVITWAQLGIHDKPVGLLNVEGYYNSLLSFIDKAVEEGFISPTARHIIVSAPSAKELVKKLEDYVPRHEKVASKKSWEMEQIGLSPTCEISR.

Substrate contacts are provided by residues glutamate 78, arginine 96–lysine 97, glycine 113–glutamate 119, and threonine 125.

It belongs to the LOG family. Expressed in roots and shoots. Detected in the vascular tissues of roots, cotyledons, leaves and pistils, in the shoot apical meristem and in immature flowers.

Its subcellular location is the cytoplasm. The protein resides in the nucleus. The enzyme catalyses N(6)-(dimethylallyl)adenosine 5'-phosphate + H2O = N(6)-dimethylallyladenine + D-ribose 5-phosphate. It carries out the reaction 9-ribosyl-trans-zeatin 5'-phosphate + H2O = trans-zeatin + D-ribose 5-phosphate. Functionally, cytokinin-activating enzyme working in the direct activation pathway. Phosphoribohydrolase that converts inactive cytokinin nucleotides to the biologically active free-base forms. The chain is Cytokinin riboside 5'-monophosphate phosphoribohydrolase LOG1 (LOG1) from Arabidopsis thaliana (Mouse-ear cress).